The chain runs to 319 residues: Putative peptide permease protein BRA0408/BS1330_II0405 (319 aa).

A run of 6 helical transmembrane segments spans residues 9–29 (LLIG…LLQL), 102–122 (LLLM…TGII), 138–158 (LALL…LYVF), 182–202 (LLRH…ALIM), 242–262 (LPVV…AIFI), and 284–304 (YPVI…VNIL). The ABC transmembrane type-1 domain occupies 98–305 (IGPTLLLMAA…ACVIIVNILT (208 aa)).

This sequence belongs to the binding-protein-dependent transport system permease family. As to quaternary structure, the complex is composed of two ATP-binding proteins (BRA0404 and BRA0405), two transmembrane proteins (BRA0407 and BRA0408) and a solute-binding protein (BRA0409).

The protein resides in the cell inner membrane. In terms of biological role, probably part of an ABC transporter complex that could be involved in peptide import. Probably responsible for the translocation of the substrate across the membrane. The chain is Putative peptide permease protein BRA0408/BS1330_II0405 from Brucella suis biovar 1 (strain 1330).